The following is a 451-amino-acid chain: mRNA cleavage and polyadenylation factor CLP1 (451 aa).

Residues E33, K72, and 133–138 each bind ATP; that span reads NTGKTA.

It belongs to the Clp1 family. Clp1 subfamily. Component of a pre-mRNA cleavage factor complex. Interacts directly with PCF11.

The protein localises to the nucleus. Its function is as follows. Required for endonucleolytic cleavage during polyadenylation-dependent pre-mRNA 3'-end formation. The sequence is that of mRNA cleavage and polyadenylation factor CLP1 from Vanderwaltozyma polyspora (strain ATCC 22028 / DSM 70294 / BCRC 21397 / CBS 2163 / NBRC 10782 / NRRL Y-8283 / UCD 57-17) (Kluyveromyces polysporus).